The following is a 102-amino-acid chain: Large ribosomal subunit protein uL23c (102 aa).

It belongs to the universal ribosomal protein uL23 family. In terms of assembly, part of the 50S ribosomal subunit.

The protein resides in the plastid. The protein localises to the chloroplast. Its function is as follows. Binds to 23S rRNA. The chain is Large ribosomal subunit protein uL23c (rpl23) from Trieres chinensis (Marine centric diatom).